We begin with the raw amino-acid sequence, 157 residues long: 2-C-methyl-D-erythritol 2,4-cyclodiphosphate synthase (157 aa).

The a divalent metal cation site is built by Asp8 and His10. 4-CDP-2-C-methyl-D-erythritol 2-phosphate contacts are provided by residues 8-10 and 34-35; these read DVH and HS. His42 provides a ligand contact to a divalent metal cation. 4-CDP-2-C-methyl-D-erythritol 2-phosphate contacts are provided by residues 56 to 58, 61 to 65, 100 to 106, 132 to 135, Phe139, and Arg142; these read DIG, FPDTD, AQAPKMA, and TTTE.

Belongs to the IspF family. In terms of assembly, homotrimer. Requires a divalent metal cation as cofactor.

It catalyses the reaction 4-CDP-2-C-methyl-D-erythritol 2-phosphate = 2-C-methyl-D-erythritol 2,4-cyclic diphosphate + CMP. It participates in isoprenoid biosynthesis; isopentenyl diphosphate biosynthesis via DXP pathway; isopentenyl diphosphate from 1-deoxy-D-xylulose 5-phosphate: step 4/6. Its function is as follows. Involved in the biosynthesis of isopentenyl diphosphate (IPP) and dimethylallyl diphosphate (DMAPP), two major building blocks of isoprenoid compounds. Catalyzes the conversion of 4-diphosphocytidyl-2-C-methyl-D-erythritol 2-phosphate (CDP-ME2P) to 2-C-methyl-D-erythritol 2,4-cyclodiphosphate (ME-CPP) with a corresponding release of cytidine 5-monophosphate (CMP). The chain is 2-C-methyl-D-erythritol 2,4-cyclodiphosphate synthase from Pseudomonas syringae pv. syringae (strain B728a).